We begin with the raw amino-acid sequence, 689 residues long: Glycine--tRNA ligase beta subunit (689 aa).

Belongs to the class-II aminoacyl-tRNA synthetase family. Tetramer of two alpha and two beta subunits.

The protein resides in the cytoplasm. The enzyme catalyses tRNA(Gly) + glycine + ATP = glycyl-tRNA(Gly) + AMP + diphosphate. This Actinobacillus succinogenes (strain ATCC 55618 / DSM 22257 / CCUG 43843 / 130Z) protein is Glycine--tRNA ligase beta subunit.